The following is a 587-amino-acid chain: Urease subunit alpha (587 aa).

Residues 134-572 (GGIDTHVHFI…LPLAQRYLYT (439 aa)) enclose the Urease domain. The Ni(2+) site is built by His139, His141, and Lys222. Lys222 bears the N6-carboxylysine mark. Substrate is bound at residue His224. 2 residues coordinate Ni(2+): His251 and His277. Catalysis depends on His325, which acts as the Proton donor. Asp365 is a Ni(2+) binding site.

Belongs to the metallo-dependent hydrolases superfamily. Urease alpha subunit family. As to quaternary structure, heterotrimer of UreA (gamma), UreB (beta) and UreC (alpha) subunits. Three heterotrimers associate to form the active enzyme. It depends on Ni cation as a cofactor. In terms of processing, carboxylation allows a single lysine to coordinate two nickel ions.

It localises to the cytoplasm. It carries out the reaction urea + 2 H2O + H(+) = hydrogencarbonate + 2 NH4(+). The protein operates within nitrogen metabolism; urea degradation; CO(2) and NH(3) from urea (urease route): step 1/1. In Clostridium perfringens, this protein is Urease subunit alpha.